A 274-amino-acid polypeptide reads, in one-letter code: Glutamate racemase (274 aa).

Substrate is bound by residues 9–10 (DS) and 41–42 (YG). Cys73 acts as the Proton donor/acceptor in catalysis. Residue 74–75 (NT) participates in substrate binding. The active-site Proton donor/acceptor is Cys183. 184–185 (TH) lines the substrate pocket.

This sequence belongs to the aspartate/glutamate racemases family.

The catalysed reaction is L-glutamate = D-glutamate. The protein operates within cell wall biogenesis; peptidoglycan biosynthesis. In terms of biological role, provides the (R)-glutamate required for cell wall biosynthesis. The protein is Glutamate racemase of Shewanella baltica (strain OS185).